The sequence spans 110 residues: Integration host factor subunit alpha (110 aa).

It belongs to the bacterial histone-like protein family. In terms of assembly, heterodimer of an alpha and a beta chain.

Its function is as follows. This protein is one of the two subunits of integration host factor, a specific DNA-binding protein that functions in genetic recombination as well as in transcriptional and translational control. The sequence is that of Integration host factor subunit alpha from Methylococcus capsulatus (strain ATCC 33009 / NCIMB 11132 / Bath).